A 343-amino-acid polypeptide reads, in one-letter code: Serine/threonine-protein kinase SRK2C (343 aa).

One can recognise a Protein kinase domain in the interval 4–260; sequence YEIVKDIGSG…IEEIKNHSWF (257 aa). Residues 10–18 and Lys33 each bind ATP; that span reads IGSGNFGVA. The active-site Proton acceptor is Asp123. Thr158 is subject to Phosphothreonine.

It belongs to the protein kinase superfamily. Ser/Thr protein kinase family. In terms of assembly, interacts with I-2 and TOPP1. Expressed in seedlings.

It catalyses the reaction L-seryl-[protein] + ATP = O-phospho-L-seryl-[protein] + ADP + H(+). The enzyme catalyses L-threonyl-[protein] + ATP = O-phospho-L-threonyl-[protein] + ADP + H(+). Functionally, involved in gene regulation and confers tolerance to drought and osmotic stress. This is Serine/threonine-protein kinase SRK2C (SRK2C) from Arabidopsis thaliana (Mouse-ear cress).